We begin with the raw amino-acid sequence, 61 residues long: Weak toxin CM-1c (61 aa).

4 cysteine pairs are disulfide-bonded: Cys3/Cys21, Cys14/Cys37, Cys41/Cys53, and Cys54/Cys59.

This sequence belongs to the three-finger toxin family. Short-chain subfamily. Orphan group VI sub-subfamily. As to expression, expressed by the venom gland.

The protein resides in the secreted. In Hemachatus haemachatus (Rinkhals), this protein is Weak toxin CM-1c.